The primary structure comprises 259 residues: Polycomb group RING finger protein 1 (259 aa).

The segment at 45-84 adopts an RING-type zinc-finger fold; that stretch reads CYLCAGYFIDATTITECLHTFCKSCIVKYLQTSKYCPLCN.

Component of a PRC1-like complex.

Its subcellular location is the nucleus. Component of a Polycomb group (PcG) multiprotein PRC1-like complex, a complex class required to maintain the transcriptionally repressive state of many genes, including Hox genes, throughout development. PcG PRC1 complex acts via chromatin remodeling and modification of histones; it mediates monoubiquitination of histone H2A 'Lys-119', rendering chromatin heritably changed in its expressibility. The polypeptide is Polycomb group RING finger protein 1 (pcgf1) (Xenopus laevis (African clawed frog)).